The chain runs to 149 residues: Oligosaccharyltransferase complex subunit ostc-A (149 aa).

Residues 1-32 (MESLYRVPFTVLECPNLKLKKPSWLHMPSAMT) lie on the Cytoplasmic side of the membrane. Residues 33–53 (VYAMVVVSYFLITGGIIYDVI) form a helical membrane-spanning segment. The Extracellular portion of the chain corresponds to 54 to 83 (VEPPSVGSMTDEHGHQRPVAFLAYRVNGQY). The chain crosses the membrane as a helical span at residues 84–104 (IMEGLASSFLFTMGGLGFIIL). The Cytoplasmic portion of the chain corresponds to 105 to 117 (DRSNTPNIPKLNR). Residues 118-138 (FLLLFIGFVCVLLSFFMARVF) traverse the membrane as a helical segment. At 139-149 (MRMKLPGYLMG) the chain is on the extracellular side.

It belongs to the OSTC family. Specific component of the STT3A-containing form of the oligosaccharyltransferase (OST) complex.

The protein localises to the membrane. It functions in the pathway protein modification; protein glycosylation. Specific component of the STT3A-containing form of the oligosaccharyl transferase (OST) complex that catalyzes the initial transfer of a defined glycan (Glc(3)Man(9)GlcNAc(2) in eukaryotes) from the lipid carrier dolichol-pyrophosphate to an asparagine residue within an Asn-X-Ser/Thr consensus motif in nascent polypeptide chains, the first step in protein N-glycosylation. N-glycosylation occurs cotranslationally and the complex associates with the Sec61 complex at the channel-forming translocon complex that mediates protein translocation across the endoplasmic reticulum (ER). All subunits are required for a maximal enzyme activity. The polypeptide is Oligosaccharyltransferase complex subunit ostc-A (Xenopus laevis (African clawed frog)).